Consider the following 258-residue polypeptide: Undecaprenyl-diphosphatase (258 aa).

Helical transmembrane passes span 1–21, 42–62, 71–91, 96–116, 134–154, 173–193, 211–231, and 237–257; these read MSII…FLPV, LKCF…FTFF, LWIK…LLYS, LFSQ…FIVV, GISY…MVPG, QTAA…ATFY, LFLL…KMFL, and FDYI…MFFV.

It belongs to the UppP family.

Its subcellular location is the cell inner membrane. The catalysed reaction is di-trans,octa-cis-undecaprenyl diphosphate + H2O = di-trans,octa-cis-undecaprenyl phosphate + phosphate + H(+). Functionally, catalyzes the dephosphorylation of undecaprenyl diphosphate (UPP). Confers resistance to bacitracin. This is Undecaprenyl-diphosphatase from Campylobacter hominis (strain ATCC BAA-381 / DSM 21671 / CCUG 45161 / LMG 19568 / NCTC 13146 / CH001A).